Reading from the N-terminus, the 635-residue chain is Threonine--tRNA ligase (635 aa).

The TGS domain occupies 1 to 61 (MPIITLPDGN…EKDANIAIIT (61 aa)). The segment at 242-533 (DHRKIGKQLD…LTEEYAGVYP (292 aa)) is catalytic. The Zn(2+) site is built by Cys-333, His-384, and His-510.

It belongs to the class-II aminoacyl-tRNA synthetase family. As to quaternary structure, homodimer. The cofactor is Zn(2+).

Its subcellular location is the cytoplasm. It catalyses the reaction tRNA(Thr) + L-threonine + ATP = L-threonyl-tRNA(Thr) + AMP + diphosphate + H(+). In terms of biological role, catalyzes the attachment of threonine to tRNA(Thr) in a two-step reaction: L-threonine is first activated by ATP to form Thr-AMP and then transferred to the acceptor end of tRNA(Thr). Also edits incorrectly charged L-seryl-tRNA(Thr). This is Threonine--tRNA ligase from Psychromonas ingrahamii (strain DSM 17664 / CCUG 51855 / 37).